The primary structure comprises 93 residues: Small ribosomal subunit protein bS20 (93 aa).

The protein belongs to the bacterial ribosomal protein bS20 family.

Binds directly to 16S ribosomal RNA. The sequence is that of Small ribosomal subunit protein bS20 from Hydrogenobaculum sp. (strain Y04AAS1).